A 464-amino-acid polypeptide reads, in one-letter code: UDP-N-acetylmuramoylalanine--D-glutamate ligase (464 aa).

G127–T133 contacts ATP.

It belongs to the MurCDEF family.

It is found in the cytoplasm. It carries out the reaction UDP-N-acetyl-alpha-D-muramoyl-L-alanine + D-glutamate + ATP = UDP-N-acetyl-alpha-D-muramoyl-L-alanyl-D-glutamate + ADP + phosphate + H(+). It participates in cell wall biogenesis; peptidoglycan biosynthesis. Its function is as follows. Cell wall formation. Catalyzes the addition of glutamate to the nucleotide precursor UDP-N-acetylmuramoyl-L-alanine (UMA). This is UDP-N-acetylmuramoylalanine--D-glutamate ligase from Roseobacter denitrificans (strain ATCC 33942 / OCh 114) (Erythrobacter sp. (strain OCh 114)).